Reading from the N-terminus, the 122-residue chain is Large ribosomal subunit protein bL12 (122 aa).

Belongs to the bacterial ribosomal protein bL12 family. As to quaternary structure, homodimer. Part of the ribosomal stalk of the 50S ribosomal subunit. Forms a multimeric L10(L12)X complex, where L10 forms an elongated spine to which 2 to 4 L12 dimers bind in a sequential fashion. Binds GTP-bound translation factors.

In terms of biological role, forms part of the ribosomal stalk which helps the ribosome interact with GTP-bound translation factors. Is thus essential for accurate translation. The chain is Large ribosomal subunit protein bL12 from Dichelobacter nodosus (strain VCS1703A).